The chain runs to 95 residues: Translation initiation factor 1A (95 aa).

Positions 7–81 (GRKNLRMPED…DKADVTWRYE (75 aa)) constitute an S1-like domain.

The protein belongs to the eIF-1A family.

Its function is as follows. Seems to be required for maximal rate of protein biosynthesis. Enhances ribosome dissociation into subunits and stabilizes the binding of the initiator Met-tRNA(I) to 40 S ribosomal subunits. The chain is Translation initiation factor 1A (eIF1A) from Halobacterium salinarum (strain ATCC 29341 / DSM 671 / R1).